The sequence spans 198 residues: Probable chorismate pyruvate-lyase (198 aa).

3 residues coordinate substrate: Arg76, Leu114, and Glu172.

Belongs to the UbiC family.

It localises to the cytoplasm. The enzyme catalyses chorismate = 4-hydroxybenzoate + pyruvate. It participates in cofactor biosynthesis; ubiquinone biosynthesis. Functionally, removes the pyruvyl group from chorismate, with concomitant aromatization of the ring, to provide 4-hydroxybenzoate (4HB) for the ubiquinone pathway. This is Probable chorismate pyruvate-lyase from Bordetella avium (strain 197N).